A 226-amino-acid chain; its full sequence is Beta-casein (226 aa).

The first 15 residues, 1–15 (MKVLILACLVALALA), serve as a signal peptide directing secretion. Thr18 is subject to Phosphothreonine; in form 5-P. A Phosphoserine; in form 4-P and form 5-P modification is found at Ser21. The residue at position 23 (Ser23) is a Phosphoserine; in form 3-P, form 4-P and form 5-P. 2 positions are modified to phosphoserine; in form 1-P, form 2-P, form 3-P, form 4-P and form 5-P: Ser24 and Ser25.

Belongs to the beta-casein family. Post-translationally, form 1-P is phosphorylated once; half of the molecules are phosphorylated on Ser-24, half on Ser-25. As to expression, mammary gland specific. Secreted in milk.

The protein localises to the secreted. Important role in determination of the surface properties of the casein micelles. This Homo sapiens (Human) protein is Beta-casein (CSN2).